The sequence spans 313 residues: Ras-related GTP-binding protein A (313 aa).

Residues serine 16, glycine 17, glycine 19, lysine 20, threonine 21, serine 22, threonine 36, threonine 42, glycine 65, and histidine 127 each contribute to the GTP site. Residues glycine 17, glycine 19, lysine 20, threonine 21, and serine 22 each coordinate GDP. The GDP site is built by histidine 127 and aspartate 130. Residue lysine 142 forms a Glycyl lysine isopeptide (Lys-Gly) (interchain with G-Cter in ubiquitin) linkage. GDP is bound by residues leucine 148 and isoleucine 164. Isoleucine 164 contacts GTP. Glycyl lysine isopeptide (Lys-Gly) (interchain with G-Cter in ubiquitin) cross-links involve residues lysine 220, lysine 230, and lysine 244. Position 309 is a phosphoserine (serine 309).

It belongs to the GTR/RAG GTP-binding protein family. As to quaternary structure, can occur as a homodimer or as a heterodimer with RRAGC or RRAGD in a sequence-independent manner; heterodimerization stabilizes proteins of the heterodimer. The GTP-bound form of RRAGA (in complex with the GDP-bound form of RRAGC or RRAGD) interacts with RPTOR, thereby promoting recruitment of mTORC1 to the lysosomes. The Rag heterodimer interacts with SLC38A9; the probable amino acid sensor. The Rag heterodimer interacts with the Ragulator complex. The GTP-bound form of RRAGA interacts with NOL8. Component of the lysosomal folliculin complex (LFC), composed of FLCN, FNIP1 (or FNIP2), RagA/RRAGA or RagB/RRAGB GDP-bound, RagC/RRAGC or RagD/RRAGD GTP-bound, and Ragulator. Interacts with SH3BP4; the interaction with this negative regulator is most probably direct, preferentially occurs with the inactive GDP-bound form of RRAGA and is negatively regulated by amino acids. Interacts (polyubiquitinated) with TSC2. Interacts with SESN1, SESN2 and SESN3. Interacts with PIP4P1. Interacts with GPR137B. Interacts with WDR83; this interaction regulates the spatiotemporal localization of mTORC1 to the lysosomal surface. In terms of processing, polybiquitinated via 'Lys-63'-linked polyubiquitination by RNF152 in response to amino acid starvation: polyubiquitination of the GDP-bound inactive form by RNF152 promotes RRAGA inactivation and interaction with the GATOR1 complex. This does not affect RRAGA degradation.

Its subcellular location is the cytoplasm. The protein resides in the nucleus. It localises to the lysosome membrane. It carries out the reaction GTP + H2O = GDP + phosphate + H(+). The activation of GTP-binding proteins is generally mediated by a guanine exchange factor (GEF), while inactivation through hydrolysis of bound GTP is catalyzed by a GTPase activating protein (GAP). The Ragulator complex functions as a GEF and promotes the active GTP-bound form. The GATOR1 complex functions as a GAP and stimulates RRAGA GTPase activity to turn it into its inactive GDP-bound form, preventing mTORC1 recruitment and activation. Guanine nucleotide-binding protein that plays a crucial role in the cellular response to amino acid availability through regulation of the mTORC1 signaling cascade. Forms heterodimeric Rag complexes with RagC/RRAGC or RagD/RRAGD and cycles between an inactive GDP-bound and an active GTP-bound form: RagA/RRAGA is in its active form when GTP-bound RagA/RRAGA forms a complex with GDP-bound RagC/RRAGC (or RagD/RRAGD) and in an inactive form when GDP-bound RagA/RRAGA heterodimerizes with GTP-bound RagC/RRAGC (or RagD/RRAGD). In its GTP-bound active form, promotes the recruitment of mTORC1 to the lysosomes and its subsequent activation by the GTPase RHEB. Involved in the RCC1/Ran-GTPase pathway. May play a direct role in a TNF-alpha signaling pathway leading to induction of cell death. This chain is Ras-related GTP-binding protein A, found in Bos taurus (Bovine).